The primary structure comprises 312 residues: MKWSEISIHTTEEAVEAVSHILHEAGASGVAIEDPAELTKEREQQYGEIYALNPDEYPAEGVLIKAYFPQTDSLHETIAGVKSSIDVLPSYDIEIGTGNITVNEVNEEDWATAWKKYYHPVQISDTFTIVPTWEEYTPSSPEEKIIELDPGMAFGTGTHPTTTMCIRALEKTVQPGDTIIDVGTGSGVLSIAAAKLGASSVQAYDLDPVAVESAEMNVRLNKTDDVVSVGQNSLLEGIEGPVDLIVANLLAEIILLFPEDAARVVKSGGLFITSGIIAAKEKVISEALEKAGFTIEEVLRMEDWVAIIARNA.

S-adenosyl-L-methionine-binding residues include Thr162, Gly183, Asp205, and Asn248.

It belongs to the methyltransferase superfamily. PrmA family.

It is found in the cytoplasm. It carries out the reaction L-lysyl-[protein] + 3 S-adenosyl-L-methionine = N(6),N(6),N(6)-trimethyl-L-lysyl-[protein] + 3 S-adenosyl-L-homocysteine + 3 H(+). In terms of biological role, methylates ribosomal protein L11. This chain is Ribosomal protein L11 methyltransferase, found in Bacillus anthracis (strain A0248).